Consider the following 482-residue polypeptide: UDP-glucose 6-dehydrogenase 2 (482 aa).

NAD(+) is bound by residues 8–13 (GAGYVG), Asp-33, Arg-38, 86–90 (VNTPT), 127–128 (ST), and Glu-163. Residues 159–163 (EFLAE), 218–225 (KLAANAFL), and 258–271 (RIGP…VGFG) contribute to the substrate site. Catalysis depends on Cys-274, which acts as the Nucleophile. Residue 274 to 277 (CFQK) participates in NAD(+) binding. 336 to 337 (FK) lines the substrate pocket. Arg-344 contributes to the NAD(+) binding site. Ser-395 bears the Phosphoserine mark. Arg-449 contributes to the substrate binding site.

The protein belongs to the UDP-glucose/GDP-mannose dehydrogenase family.

It carries out the reaction UDP-alpha-D-glucose + 2 NAD(+) + H2O = UDP-alpha-D-glucuronate + 2 NADH + 3 H(+). It participates in nucleotide-sugar biosynthesis; UDP-alpha-D-glucuronate biosynthesis; UDP-alpha-D-glucuronate from UDP-alpha-D-glucose: step 1/1. Functionally, involved in the biosynthesis of UDP-glucuronic acid (UDP-GlcA), providing nucleotide sugars for cell-wall polymers. The protein is UDP-glucose 6-dehydrogenase 2 (UGD2) of Oryza sativa subsp. japonica (Rice).